The following is a 72-amino-acid chain: UPF0154 protein Bcer98_2334 (72 aa).

Residues 3 to 23 (IWSGILVGVVALLAGVALGFF) traverse the membrane as a helical segment.

The protein belongs to the UPF0154 family.

It is found in the cell membrane. In Bacillus cytotoxicus (strain DSM 22905 / CIP 110041 / 391-98 / NVH 391-98), this protein is UPF0154 protein Bcer98_2334.